The sequence spans 305 residues: Translation initiation factor eIF2B subunit alpha (305 aa).

Residue K35 is modified to N6-acetyllysine.

It belongs to the eIF-2B alpha/beta/delta subunits family. Component of the translation initiation factor 2B (eIF2B) complex which is a heterodecamer of two sets of five different subunits: alpha, beta, gamma, delta and epsilon. Subunits alpha, beta and delta comprise a regulatory subcomplex and subunits epsilon and gamma comprise a catalytic subcomplex. Within the complex, the hexameric regulatory complex resides at the center, with the two heterodimeric catalytic subcomplexes bound on opposite sides.

It is found in the cytoplasm. Its subcellular location is the cytosol. Its activity is regulated as follows. Activated by the chemical integrated stress response (ISR) inhibitor ISRIB which stimulates guanine nucleotide exchange factor activity for both phosphorylated and unphosphorylated eIF2. Its function is as follows. Acts as a component of the translation initiation factor 2B (eIF2B) complex, which catalyzes the exchange of GDP for GTP on eukaryotic initiation factor 2 (eIF2) gamma subunit. Its guanine nucleotide exchange factor activity is repressed when bound to eIF2 complex phosphorylated on the alpha subunit, thereby limiting the amount of methionyl-initiator methionine tRNA available to the ribosome and consequently global translation is repressed. In Mus musculus (Mouse), this protein is Translation initiation factor eIF2B subunit alpha (Eif2b1).